We begin with the raw amino-acid sequence, 382 residues long: Galactokinase (382 aa).

Residue 34-37 (EHTD) participates in substrate binding. Residue 124-130 (GAGLSSS) coordinates ATP. 2 residues coordinate Mg(2+): Ser130 and Glu162. Asp174 functions as the Proton acceptor in the catalytic mechanism. Tyr223 contributes to the substrate binding site.

This sequence belongs to the GHMP kinase family. GalK subfamily.

Its subcellular location is the cytoplasm. The enzyme catalyses alpha-D-galactose + ATP = alpha-D-galactose 1-phosphate + ADP + H(+). The protein operates within carbohydrate metabolism; galactose metabolism. Functionally, catalyzes the transfer of the gamma-phosphate of ATP to D-galactose to form alpha-D-galactose-1-phosphate (Gal-1-P). This chain is Galactokinase, found in Salmonella gallinarum (strain 287/91 / NCTC 13346).